A 349-amino-acid chain; its full sequence is Ferredoxin--NADP reductase 1 (349 aa).

Residues Glu36, Lys44, Tyr48, Val88, Leu123, Asp290, and Ser331 each contribute to the FAD site.

Belongs to the ferredoxin--NADP reductase type 2 family. As to quaternary structure, homodimer. FAD is required as a cofactor.

It catalyses the reaction 2 reduced [2Fe-2S]-[ferredoxin] + NADP(+) + H(+) = 2 oxidized [2Fe-2S]-[ferredoxin] + NADPH. This is Ferredoxin--NADP reductase 1 from Bacillus cereus (strain ATCC 10987 / NRS 248).